A 128-amino-acid chain; its full sequence is Large ribosomal subunit protein mL51 (128 aa).

A mitochondrion-targeting transit peptide spans 1–31 (MAGNLLSGAGRRLWDWVPLACRSFSLGVPRL).

Belongs to the mitochondrion-specific ribosomal protein mL51 family. In terms of assembly, component of the mitochondrial large ribosomal subunit (mt-LSU). Mature mammalian 55S mitochondrial ribosomes consist of a small (28S) and a large (39S) subunit. The 28S small subunit contains a 12S ribosomal RNA (12S mt-rRNA) and 30 different proteins. The 39S large subunit contains a 16S rRNA (16S mt-rRNA), a copy of mitochondrial valine transfer RNA (mt-tRNA(Val)), which plays an integral structural role, and 52 different proteins. Interacts with OXA1L.

The protein resides in the mitochondrion. This is Large ribosomal subunit protein mL51 (MRPL51) from Homo sapiens (Human).